The primary structure comprises 236 residues: LexA repressor (236 aa).

Residues 1-25 form a disordered region; sequence MNDSNDTSVAGGAAGADSRVLSADS. The H-T-H motif DNA-binding region spans 51-71; the sequence is IREIGDAVGLTSTSSVAHQLR. Active-site for autocatalytic cleavage activity residues include serine 160 and lysine 197.

Belongs to the peptidase S24 family. In terms of assembly, homodimer.

It catalyses the reaction Hydrolysis of Ala-|-Gly bond in repressor LexA.. In terms of biological role, represses a number of genes involved in the response to DNA damage (SOS response), including recA and lexA. In the presence of single-stranded DNA, RecA interacts with LexA causing an autocatalytic cleavage which disrupts the DNA-binding part of LexA, leading to derepression of the SOS regulon and eventually DNA repair. This is LexA repressor from Mycobacterium tuberculosis (strain ATCC 25177 / H37Ra).